The primary structure comprises 335 residues: Anthranilate phosphoribosyltransferase (335 aa).

5-phospho-alpha-D-ribose 1-diphosphate contacts are provided by residues G79, 82-83 (GD), S87, 89-92 (NIST), 107-115 (KHGNRSITS), and S119. G79 contributes to the anthranilate binding site. Mg(2+) is bound at residue S91. N110 contributes to the anthranilate binding site. R165 is a binding site for anthranilate. D224 and E225 together coordinate Mg(2+).

It belongs to the anthranilate phosphoribosyltransferase family. As to quaternary structure, homodimer. The cofactor is Mg(2+).

It catalyses the reaction N-(5-phospho-beta-D-ribosyl)anthranilate + diphosphate = 5-phospho-alpha-D-ribose 1-diphosphate + anthranilate. Its pathway is amino-acid biosynthesis; L-tryptophan biosynthesis; L-tryptophan from chorismate: step 2/5. In terms of biological role, catalyzes the transfer of the phosphoribosyl group of 5-phosphorylribose-1-pyrophosphate (PRPP) to anthranilate to yield N-(5'-phosphoribosyl)-anthranilate (PRA). This chain is Anthranilate phosphoribosyltransferase, found in Lactococcus lactis subsp. cremoris (strain MG1363).